The sequence spans 346 residues: 3 beta-hydroxysteroid dehydrogenase/Delta 5--&gt;4-isomerase (346 aa).

Y147 (proton acceptor) is an active-site residue. K151 is a binding site for NAD(+).

The protein belongs to the 3-beta-HSD family.

It catalyses the reaction a 3beta-hydroxy-Delta(5)-steroid + NAD(+) = a 3-oxo-Delta(5)-steroid + NADH + H(+). It carries out the reaction a 3-oxo-Delta(5)-steroid = a 3-oxo-Delta(4)-steroid. The protein operates within lipid metabolism; steroid biosynthesis. Its function is as follows. Catalyzes the oxidative conversion of Delta(5)-ene-3-beta-hydroxy steroid, and the oxidative conversion of ketosteroids. The 3-beta-HSD enzymatic system plays a crucial role in the biosynthesis of all classes of hormonal steroids. During viral infection, steroid production contributes to virulence by inhibiting the host inflammatory response. The protein is 3 beta-hydroxysteroid dehydrogenase/Delta 5--&gt;4-isomerase (OPG174) of Monkeypox virus.